Reading from the N-terminus, the 329-residue chain is Acetoacetyl CoA synthase NphT7 (329 aa).

Residues Cys-115, His-256, and Asn-286 contribute to the active site.

This sequence belongs to the thiolase-like superfamily. FabH family. As to quaternary structure, homodimer.

Its subcellular location is the cytoplasm. The catalysed reaction is malonyl-CoA + acetyl-CoA + H(+) = acetoacetyl-CoA + CO2 + CoA. It functions in the pathway metabolic intermediate biosynthesis; (R)-mevalonate biosynthesis. Its function is as follows. Catalyzes the condensation of acetyl-CoA and malonyl-CoA to form acetoacetyl-CoA and CoA. Does not accept malonyl-[acyl-carrier-protein] as a substrate. Can also convert malonyl-CoA into acetyl-CoA via decarboxylation of malonyl-CoA. This Streptomyces sp. (strain CL190) protein is Acetoacetyl CoA synthase NphT7 (nphT7).